The sequence spans 512 residues: Polyamine oxidase 1 (512 aa).

FAD is bound by residues Glu-38 and Arg-46. The interval 448 to 470 (DRMAEPLPRGPDAAADERPPSPR) is disordered. Residue Glu-476 coordinates FAD.

Belongs to the flavin monoamine oxidase family. FAD is required as a cofactor.

It localises to the cytoplasm. It carries out the reaction spermine + O2 + H2O = 3-aminopropanal + spermidine + H2O2. The catalysed reaction is N(1)-acetylspermine + O2 + H2O = 3-acetamidopropanal + spermidine + H2O2. The enzyme catalyses norspermine + O2 + H2O = norspermidine + 3-aminopropanal + H2O2. It catalyses the reaction thermospermine + O2 + H2O = 3-aminopropanal + spermidine + H2O2. It functions in the pathway amine and polyamine degradation; spermine degradation. In terms of biological role, flavoenzyme involved in polyamine back-conversion. Catalyzes the oxidation of the secondary amino group of polyamines, such as spermine and its acetyl derivatives. Substrate preference is thermospermine &gt; spermine &gt; norspermine &gt; N(1)-acetylspermine. No activity detected when putrescine or spermidine are used as substrates. Plays an important role in the regulation of polyamine intracellular concentration. This chain is Polyamine oxidase 1, found in Oryza sativa subsp. japonica (Rice).